A 255-amino-acid polypeptide reads, in one-letter code: Small ribosomal subunit protein uS2 (255 aa).

The tract at residues 233–255 (DFVAEEAASEESLEELAEIVEGK) is disordered.

The protein belongs to the universal ribosomal protein uS2 family.

This is Small ribosomal subunit protein uS2 from Lactococcus lactis subsp. cremoris (strain SK11).